Reading from the N-terminus, the 1482-residue chain is Cystic fibrosis transmembrane conductance regulator (1482 aa).

Over 1-77 (MQRSPLEKAS…KLINALRRCF (77 aa)) the chain is Cytoplasmic. Residues 78 to 98 (FWRFTFYGIILYLGEVTKAVQ) traverse the membrane as a helical segment. The ABC transmembrane type-1 1 domain maps to 81–365 (FTFYGIILYL…WAVQTWYDSL (285 aa)). The Extracellular segment spans residues 99–122 (PLLLGRIIASYDPDNKVERSIAIY). A helical membrane pass occupies residues 123–146 (LAVGLCLLFVVRTLLLHPAIFGLH). Topologically, residues 147-195 (HIGMQMRIAMFSLIYKKTLKLSSRVLDKISIGQLVSLLSNNLNKFDEGL) are cytoplasmic. A helical membrane pass occupies residues 196 to 216 (ALAHFVWIAPLQVTLLMGLLW). At 217–222 (DLLQAS) the chain is on the extracellular side. Residues 223–243 (AFSGLGVLIILACFQAGFGRM) traverse the membrane as a helical segment. Topologically, residues 244 to 298 (MMKYRDQRAGKINERLVITSEMIENIQSVKAYCWEEALEKMIENFRQSELRLTRK) are cytoplasmic. A helical membrane pass occupies residues 299–319 (AAYVRYFNSSAFFFSGFFVVF). Residues 320 to 339 (LSVLPYALIKGIILRKIFTT) are Extracellular-facing. The chain crosses the membrane as a helical span at residues 340 to 358 (ISFCIVLRMAVTRQFPWAV). The Cytoplasmic segment spans residues 359-859 (QTWYDSLGAI…YLRYITVHKR (501 aa)). ATP is bound by residues Trp-401, Ser-434, 458 to 465 (GSTGAGKT), and Gln-493. One can recognise an ABC transporter 1 domain in the interval 423–646 (NVDNSLFFSN…RPDFSSKLMG (224 aa)). A lipid anchor (S-palmitoyl cysteine) is attached at Cys-524. A phosphoserine mark is found at Ser-549 and Ser-660. The interval 654–832 (SAERRNSIIT…EEINEEDLKE (179 aa)) is disordered R region. Phosphoserine; by PKA is present on Ser-670. Phosphoserine is present on Ser-686. Lys-688 participates in a covalent cross-link: Glycyl lysine isopeptide (Lys-Gly) (interchain with G-Cter in ubiquitin). A phosphoserine mark is found at Ser-700 and Ser-712. Residue Thr-717 is modified to Phosphothreonine. Residues Ser-737, Ser-768, Ser-796, and Ser-814 each carry the phosphoserine modification. Residues 860-880 (LIFVLIWCFVVFLIEVAASLV) traverse the membrane as a helical segment. Positions 860–1156 (LIFVLIWCFV…AVNSSIDVDS (297 aa)) constitute an ABC transmembrane type-1 2 domain. The Extracellular portion of the chain corresponds to 881–919 (LLCLLSKVSPEDKGNTTKSANDSSAVIITSTSSFYFLYI). Asn-895 and Asn-901 each carry an N-linked (GlcNAc...) asparagine glycan. Residues 920 to 940 (YVGVADTFLALGLFRGLPLVH) traverse the membrane as a discontinuously helical segment. Residues 941 to 991 (TLITVSKILHHKMLHSVLQAPMSTLNTLKAGGILNRFSKDIAILDDLLPLT) are Cytoplasmic-facing. The helical transmembrane segment at 992-1012 (IFDFIQLLLIVIGAVAVVSIL) threads the bilayer. The Extracellular portion of the chain corresponds to 1013–1014 (KP). The helical transmembrane segment at 1015–1035 (YIFLATVPVIVAFVLLRAYFL) threads the bilayer. Residues 1036–1096 (HTSQQLKQLE…TANWFLYLST (61 aa)) lie on the Cytoplasmic side of the membrane. The helical transmembrane segment at 1097–1117 (LRWFQMRIEMIFVIFFIAVTF) threads the bilayer. The Extracellular portion of the chain corresponds to 1118–1131 (ISILTTGEGEGTVG). The chain crosses the membrane as a helical span at residues 1132–1152 (IILTLAMNIMSTLQWAVNSSI). Topologically, residues 1153-1482 (DVDSLMRSVS…TEEEVQDTRL (330 aa)) are cytoplasmic. In terms of domain architecture, ABC transporter 2 spans 1212–1445 (MTVKDLTAKY…KSLFRQAISP (234 aa)). Residues Tyr-1221 and 1246–1253 (GRTGSGKS) contribute to the ATP site. Positions 1388–1482 (RTLKQAFADC…TEEEVQDTRL (95 aa)) are interaction with GORASP2. The S-palmitoyl cysteine moiety is linked to residue Cys-1397. Ser-1446 bears the Phosphoserine mark. The disordered stretch occupies residues 1450–1482 (KLFPHQNSGKHKSRSKITALKEETEEEVQDTRL). Over residues 1472–1482 (ETEEEVQDTRL) the composition is skewed to acidic residues. Positions 1480–1482 (TRL) match the PDZ-binding motif.

The protein belongs to the ABC transporter superfamily. ABCC family. CFTR transporter (TC 3.A.1.202) subfamily. In terms of assembly, monomer; does not require oligomerization for channel activity. May form oligomers in the membrane. Interacts with SLC26A3, SLC26A6 and NHERF1. Interacts with SHANK2. Interacts with MYO6. Interacts (via C-terminus) with GOPC (via PDZ domain); this promotes CFTR internalization and thereby decreases channel activity. Interacts with SLC4A7 through NHERF1. Found in a complex with MYO5B and RAB11A. Interacts with ANO1. Interacts with SLC26A8. Interacts with AHCYL1; the interaction increases CFTR activity. Interacts with CSE1L. The core-glycosylated form interacts with GORASP2 (via PDZ GRASP-type 1 domain) in respone to ER stress. Interacts with MARCHF2; the interaction leads to CFTR ubiqtuitination and degradation. Interacts with ADGRG2. In terms of processing, N-glycosylated. Phosphorylated; cAMP treatment promotes phosphorylation and activates the channel. Dephosphorylation decreases the ATPase activity (in vitro). Phosphorylation at PKA sites activates the channel. Phosphorylation at PKC sites enhances the response to phosphorylation by PKA. Phosphorylated by AMPK; this inhibits channel activity. Post-translationally, ubiquitinated, leading to its degradation in the lysosome. Deubiquitination by USP10 in early endosomes enhances its endocytic recycling to the cell membrane. Ubiquitinated by RNF185 during ER stress. Ubiquitinated by MARCHF2.

The protein resides in the apical cell membrane. It is found in the early endosome membrane. Its subcellular location is the cell membrane. It localises to the recycling endosome membrane. The protein localises to the endoplasmic reticulum membrane. The protein resides in the nucleus. It catalyses the reaction ATP + H2O + closed Cl(-) channel = ADP + phosphate + open Cl(-) channel.. The enzyme catalyses chloride(in) = chloride(out). The catalysed reaction is hydrogencarbonate(in) = hydrogencarbonate(out). It carries out the reaction ATP + H2O = ADP + phosphate + H(+). Functionally, epithelial ion channel that plays an important role in the regulation of epithelial ion and water transport and fluid homeostasis. Mediates the transport of chloride ions across the cell membrane. Possesses an intrinsic ATPase activity and utilizes ATP to gate its channel; the passive flow of anions through the channel is gated by cycles of ATP binding and hydrolysis by the ATP-binding domains. The ion channel is also permeable to HCO(3)(-); selectivity depends on the extracellular chloride concentration. Exerts its function also by modulating the activity of other ion channels and transporters. Contributes to the regulation of the pH and the ion content of the epithelial fluid layer. Modulates the activity of the epithelial sodium channel (ENaC) complex, in part by regulating the cell surface expression of the ENaC complex. May regulate bicarbonate secretion and salvage in epithelial cells by regulating the transporter SLC4A7. Can inhibit the chloride channel activity of ANO1. Plays a role in the chloride and bicarbonate homeostasis during sperm epididymal maturation and capacitation. This chain is Cystic fibrosis transmembrane conductance regulator, found in Dasypus novemcinctus (Nine-banded armadillo).